A 1185-amino-acid polypeptide reads, in one-letter code: DNA-directed RNA polymerase subunit beta' (1185 aa).

Residues Cys-67, Cys-69, Cys-82, and Cys-85 each coordinate Zn(2+). Mg(2+)-binding residues include Asp-457, Asp-459, and Asp-461. Residues Cys-802, Cys-876, Cys-883, and Cys-886 each coordinate Zn(2+).

It belongs to the RNA polymerase beta' chain family. The RNAP catalytic core consists of 2 alpha, 1 beta, 1 beta' and 1 omega subunit. When a sigma factor is associated with the core the holoenzyme is formed, which can initiate transcription. It depends on Mg(2+) as a cofactor. Zn(2+) is required as a cofactor.

It catalyses the reaction RNA(n) + a ribonucleoside 5'-triphosphate = RNA(n+1) + diphosphate. DNA-dependent RNA polymerase catalyzes the transcription of DNA into RNA using the four ribonucleoside triphosphates as substrates. This chain is DNA-directed RNA polymerase subunit beta', found in Clostridium novyi (strain NT).